The chain runs to 82 residues: ATP synthase subunit c, chloroplastic (82 aa).

2 consecutive transmembrane segments (helical) span residues Ala-7–Gly-27 and Leu-57–Ala-77.

It belongs to the ATPase C chain family. In terms of assembly, F-type ATPases have 2 components, F(1) - the catalytic core - and F(0) - the membrane proton channel. F(1) has five subunits: alpha(3), beta(3), gamma(1), delta(1), epsilon(1). F(0) has four main subunits: a(1), b(1), b'(1) and c(10-14). The alpha and beta chains form an alternating ring which encloses part of the gamma chain. F(1) is attached to F(0) by a central stalk formed by the gamma and epsilon chains, while a peripheral stalk is formed by the delta, b and b' chains.

The protein resides in the plastid. Its subcellular location is the chloroplast thylakoid membrane. Its function is as follows. F(1)F(0) ATP synthase produces ATP from ADP in the presence of a proton or sodium gradient. F-type ATPases consist of two structural domains, F(1) containing the extramembraneous catalytic core and F(0) containing the membrane proton channel, linked together by a central stalk and a peripheral stalk. During catalysis, ATP synthesis in the catalytic domain of F(1) is coupled via a rotary mechanism of the central stalk subunits to proton translocation. Functionally, key component of the F(0) channel; it plays a direct role in translocation across the membrane. A homomeric c-ring of between 10-14 subunits forms the central stalk rotor element with the F(1) delta and epsilon subunits. The sequence is that of ATP synthase subunit c, chloroplastic from Porphyra purpurea (Red seaweed).